A 351-amino-acid polypeptide reads, in one-letter code: Prostaglandin reductase 2 (351 aa).

99–100 (FY) contributes to the substrate binding site. NADP(+) is bound by residues 165–168 (GACG), Lys-192, Tyr-208, Asn-231, 253–259 (CGQISQY), 287–289 (FTV), and Asn-337. Residue 288–290 (TVL) participates in substrate binding.

Belongs to the NADP-dependent oxidoreductase L4BD family. Monomer. Widely expressed with highest levels in adipose tissues.

It localises to the cytoplasm. It carries out the reaction 13,14-dihydro-15-oxo-prostaglandin E2 + NAD(+) = 15-oxoprostaglandin E2 + NADH + H(+). The catalysed reaction is 13,14-dihydro-15-oxo-prostaglandin E2 + NADP(+) = 15-oxoprostaglandin E2 + NADPH + H(+). The enzyme catalyses 13,14-dihydro-15-oxo-PGF2alpha + NADP(+) = 15-oxoprostaglandin F2alpha + NADPH + H(+). It catalyses the reaction 13,14-dihydro-15-oxo-prostaglandin E1 + NADP(+) = 15-oxoprostaglandin E1 + NADPH + H(+). It carries out the reaction 13,14-dihydro-15-oxo-prostaglandin F1alpha + NADP(+) = 15-oxoprostaglandin F1alpha + NADPH + H(+). Its function is as follows. Functions as 15-oxo-prostaglandin 13-reductase and acts on 15-keto-PGE1, 15-keto-PGE2, 15-keto-PGE1-alpha and 15-keto-PGE2-alpha with highest activity towards 15-keto-PGE2. Overexpression represses transcriptional activity of PPARG and inhibits adipocyte differentiation. This chain is Prostaglandin reductase 2, found in Mus musculus (Mouse).